The sequence spans 144 residues: Apidaecins type 22 (144 aa).

A signal peptide spans Met-1–Gly-19. Propeptides lie at residues Asn-20 to Pro-42, Glu-63 to Pro-70, Glu-91 to Pro-98, and Glu-119 to Pro-126. Residues Asn-20–Ile-144 are disordered. A compositionally biased stretch (pro residues) spans Ile-134–Ile-144.

This sequence belongs to the apidaecin family.

Its subcellular location is the secreted. Its function is as follows. Apidaecins have bactericidal activity; predominantly against Gram-negative bacteria. They seem to interfere with cell propagation. The chain is Apidaecins type 22 from Apis mellifera (Honeybee).